Reading from the N-terminus, the 946-residue chain is Phosphatidylinositol 4,5-bisphosphate 5-phosphatase INP51 (946 aa).

An SAC domain is found at 151 to 480 (LKKLFSDGTF…YYWLDRTYTK (330 aa)). Disordered stretches follow at residues 872 to 902 (SDSI…SDLK) and 927 to 946 (PKRD…FIER). Acidic residues predominate over residues 936–946 (ENEDEPLFIER).

Belongs to the synaptojanin family. It in the central section; belongs to the inositol 1,4,5-trisphosphate 5-phosphatase family. Interacts with IRS4 and TAX4.

Its subcellular location is the cytoplasm. It is found in the cytoskeleton. The protein localises to the actin patch. It catalyses the reaction a 1,2-diacyl-sn-glycero-3-phospho-(1D-myo-inositol-4,5-bisphosphate) + H2O = a 1,2-diacyl-sn-glycero-3-phospho-(1D-myo-inositol 4-phosphate) + phosphate. With respect to regulation, IRS4 and TAX4 are both positive regulator of INP51 activity and phosphatidylinositol 4,5-bisphosphate turnover. Its function is as follows. Controls the cellular levels and subcellular distribution of phosphatidylinositol 4,5-bisphosphate (PtdIns(4,5)P2). Does not utilize phosphatidylinositol 3,5-bisphosphate (PtdIns(3,5)P2), nor phosphatidylinositol 3-phosphate (PtdIns(3)P) and phosphatidylinositol 4-phosphate (PtdIns(4)P). Plays an essential role in a TGN (trans Golgi network)-to-early endosome pathway. Involved in endocytosis and acts as a negative regulator of the Slm pathway which modulates polarized actin assembly and growth. This chain is Phosphatidylinositol 4,5-bisphosphate 5-phosphatase INP51 (INP51), found in Saccharomyces cerevisiae (strain ATCC 204508 / S288c) (Baker's yeast).